Consider the following 368-residue polypeptide: SH3 domain-containing protein 2 (368 aa).

2 coiled-coil regions span residues methionine 1–alanine 21 and leucine 146–glutamate 210. Residues methionine 1–alanine 264 form the BAR domain. The segment at glutamate 258–glutamate 281 is disordered. In terms of domain architecture, SH3 spans methionine 299 to arginine 358.

As to quaternary structure, homodimer. Interacts with FREE1. Interacts (via SH3 domain) with ATG8E and ATG8F. Component of a phosphoinositide 3-kinase (PI3K) complex containing ATG6, SH3P2 and FREE1. Binds to SH3P3 and DRP1A. Forms a complex made of SH3P2 and DRP1A and triggers its accumulation at the cell plate. Highly expressed in seedlings. Detected in flowers, leaves and stems.

Its subcellular location is the cytoplasm. The protein resides in the cytoplasmic vesicle. It localises to the clathrin-coated vesicle. The protein localises to the cell membrane. It is found in the late endosome. Its subcellular location is the autophagosome membrane. Functionally, regulator for autophaosome formation and/or maturation. Binds phosphatidylinositol-phosphate; highest affinity for vesicles containing PtdIns(3,4,5)P(3), followed by those containing PtdIns(4,5)P(2) and PtdIns(3,4)P(2), with minimal binding to phosphatidylinositol monophosphates, including PtdIns(3)P. Together with DRP1A, converts the fused vesicles to tubular structures at the cell plate during cytokinesis. The sequence is that of SH3 domain-containing protein 2 from Arabidopsis thaliana (Mouse-ear cress).